An 870-amino-acid polypeptide reads, in one-letter code: Valine--tRNA ligase (870 aa).

Over residues 1-13 the composition is skewed to polar residues; sequence MTSQTFTTSSATP. Positions 1–21 are disordered; sequence MTSQTFTTSSATPPTRGVVPD. Positions 63 to 73 match the 'HIGH' region motif; it reads PTVSGHLHPGH. A disordered region spans residues 479 to 505; the sequence is YDHPLLPDESALPVDPASQPPSGYQES. The 'KMSKS' region signature appears at 595–599; the sequence is KMSKS. Lysine 598 is an ATP binding site.

This sequence belongs to the class-I aminoacyl-tRNA synthetase family. ValS type 2 subfamily. Monomer.

Its subcellular location is the cytoplasm. It catalyses the reaction tRNA(Val) + L-valine + ATP = L-valyl-tRNA(Val) + AMP + diphosphate. Functionally, catalyzes the attachment of valine to tRNA(Val). As ValRS can inadvertently accommodate and process structurally similar amino acids such as threonine, to avoid such errors, it has a 'posttransfer' editing activity that hydrolyzes mischarged Thr-tRNA(Val) in a tRNA-dependent manner. The protein is Valine--tRNA ligase of Cutibacterium acnes (strain DSM 16379 / KPA171202) (Propionibacterium acnes).